Consider the following 125-residue polypeptide: MPTINQLVRKPRVSEVVKSKSPALENCPQRRGVCTRVYTTTPKKPNSALRKVAKVRLTNGFEVISYIGGEGHNLQEHSVVLIRGGRVKDLPGVRYHIVRGSLDLQGVKDRKQARSKYGAKRPKAA.

Position 89 is a 3-methylthioaspartic acid (Asp-89).

The protein belongs to the universal ribosomal protein uS12 family. As to quaternary structure, part of the 30S ribosomal subunit. Contacts proteins S8 and S17. May interact with IF1 in the 30S initiation complex.

Functionally, with S4 and S5 plays an important role in translational accuracy. In terms of biological role, interacts with and stabilizes bases of the 16S rRNA that are involved in tRNA selection in the A site and with the mRNA backbone. Located at the interface of the 30S and 50S subunits, it traverses the body of the 30S subunit contacting proteins on the other side and probably holding the rRNA structure together. The combined cluster of proteins S8, S12 and S17 appears to hold together the shoulder and platform of the 30S subunit. This chain is Small ribosomal subunit protein uS12, found in Cupriavidus necator (strain ATCC 17699 / DSM 428 / KCTC 22496 / NCIMB 10442 / H16 / Stanier 337) (Ralstonia eutropha).